The following is a 126-amino-acid chain: MHELSYATSVLNAILDAIKQQETLGRKVIKVTDINLEIGDLTLLSVDQLQFVFEVISEDTVCNGAELKAEMVKPKIFCMDCEFEGNLDTKDELEVRCPKCESVNVKLKGGKEFNIVNATIEFDDEE.

His-2 is a Ni(2+) binding site. Cys-78, Cys-81, Cys-97, and Cys-100 together coordinate Zn(2+).

Belongs to the HypA/HybF family.

In terms of biological role, involved in the maturation of [NiFe] hydrogenases. Required for nickel insertion into the metal center of the hydrogenase. In Methanococcus maripaludis (strain C6 / ATCC BAA-1332), this protein is Hydrogenase maturation factor HypA.